We begin with the raw amino-acid sequence, 219 residues long: Thiopurine S-methyltransferase (219 aa).

4 residues coordinate S-adenosyl-L-methionine: tryptophan 10, leucine 45, glutamate 66, and arginine 123.

Belongs to the class I-like SAM-binding methyltransferase superfamily. TPMT family.

The protein resides in the cytoplasm. The catalysed reaction is S-adenosyl-L-methionine + a thiopurine = S-adenosyl-L-homocysteine + a thiopurine S-methylether.. The protein is Thiopurine S-methyltransferase of Shewanella frigidimarina (strain NCIMB 400).